A 430-amino-acid polypeptide reads, in one-letter code: Histone acetyltransferase type B subunit 2 (430 aa).

WD repeat units follow at residues 129–169 (PHDG…ALTT), 180–220 (GHTA…FTSS), 233–273 (RHTD…EEEA), 279–319 (AHSK…QRLH), and 323–363 (GHED…EEQT). Residues 365–369 (EDAED) are interaction with the histone H4 N-terminus. The WD 6 repeat unit spans residues 380 to 420 (GHTNRISEFSWCPNERWVVGSLADDNILQIWSPSRVIWGRD). S425 is modified (phosphoserine).

Belongs to the WD repeat RBAP46/RBAP48/MSI1 family. Component of the HAT-B complex composed of at least hat1 and hat2. The HAT-B complex binds to histone H4 tail. Component of the CENP-A recruiting complex composed of at least mis16, mis19, mis19 and mis20.

The protein localises to the cytoplasm. Its subcellular location is the nucleus. It is found in the chromosome. The protein resides in the centromere. It localises to the kinetochore. Functionally, regulatory subunit of the histone acetylase B (HAT-B) complex. The complex acetylates 'Lys-12' of histone H4 which is required for telomeric silencing. Component of the CENP-A recruiting complex that ensures the integrity of mitotic spindles through maintenance of kinetochore factors mis6/CENP-I and cnp1/CENP-A. Maintains the deacetylated state of histones specifically in the central core of the centromeres. This Schizosaccharomyces pombe (strain 972 / ATCC 24843) (Fission yeast) protein is Histone acetyltransferase type B subunit 2 (mis16).